Here is an 874-residue protein sequence, read N- to C-terminus: Valine--tRNA ligase (874 aa).

The interval 1 to 22 (MTENSQQPQPAPSTELPTQYTP) is disordered. The 'HIGH' region signature appears at 57–67 (PNVTGSLHLGH). Positions 531–535 (KMSKS) match the 'KMSKS' region motif. Lys-534 contacts ATP. Residues 805 to 871 (VIDFAAERKR…TRITAQLEKL (67 aa)) adopt a coiled-coil conformation.

The protein belongs to the class-I aminoacyl-tRNA synthetase family. ValS type 1 subfamily. As to quaternary structure, monomer.

The protein localises to the cytoplasm. It carries out the reaction tRNA(Val) + L-valine + ATP = L-valyl-tRNA(Val) + AMP + diphosphate. Its function is as follows. Catalyzes the attachment of valine to tRNA(Val). As ValRS can inadvertently accommodate and process structurally similar amino acids such as threonine, to avoid such errors, it has a 'posttransfer' editing activity that hydrolyzes mischarged Thr-tRNA(Val) in a tRNA-dependent manner. This chain is Valine--tRNA ligase, found in Streptomyces coelicolor (strain ATCC BAA-471 / A3(2) / M145).